The chain runs to 234 residues: Peptidase E (234 aa).

Active-site charge relay system residues include Ser123, Asp138, and His160.

Belongs to the peptidase S51 family.

It localises to the cytoplasm. The catalysed reaction is Dipeptidase E catalyzes the hydrolysis of dipeptides Asp-|-Xaa. It does not act on peptides with N-terminal Glu, Asn or Gln, nor does it cleave isoaspartyl peptides.. Functionally, hydrolyzes dipeptides containing N-terminal aspartate residues. May play a role in allowing the cell to use peptide aspartate to spare carbon otherwise required for the synthesis of the aspartate family of amino acids. The chain is Peptidase E from Actinobacillus pleuropneumoniae serotype 5b (strain L20).